A 484-amino-acid polypeptide reads, in one-letter code: Glutamate--tRNA ligase (484 aa).

A 'HIGH' region motif is present at residues 12–22 (PSPTGEPHVGT). The 'KMSKS' region motif lies at 253 to 257 (KLSKR). ATP is bound at residue Lys-256.

Belongs to the class-I aminoacyl-tRNA synthetase family. Glutamate--tRNA ligase type 1 subfamily. As to quaternary structure, monomer.

The protein localises to the cytoplasm. The catalysed reaction is tRNA(Glu) + L-glutamate + ATP = L-glutamyl-tRNA(Glu) + AMP + diphosphate. Catalyzes the attachment of glutamate to tRNA(Glu) in a two-step reaction: glutamate is first activated by ATP to form Glu-AMP and then transferred to the acceptor end of tRNA(Glu). The sequence is that of Glutamate--tRNA ligase from Rhizobium leguminosarum bv. trifolii (strain WSM2304).